The following is a 115-amino-acid chain: Large ribosomal subunit protein uL22c (115 aa).

The protein belongs to the universal ribosomal protein uL22 family. In terms of assembly, part of the 50S ribosomal subunit.

The protein localises to the plastid. Its subcellular location is the chloroplast. This protein binds specifically to 23S rRNA. In terms of biological role, the globular domain of the protein is located near the polypeptide exit tunnel on the outside of the subunit, while an extended beta-hairpin is found that lines the wall of the exit tunnel in the center of the 70S ribosome. This Thalassiosira pseudonana (Marine diatom) protein is Large ribosomal subunit protein uL22c (rpl22).